Reading from the N-terminus, the 525-residue chain is NAD(P)H-quinone oxidoreductase chain 4-1 (525 aa).

The next 14 membrane-spanning stretches (helical) occupy residues 4-24, 37-57, 89-109, 111-131, 134-154, 167-187, 210-230, 241-261, 273-293, 309-329, 330-350, 385-405, 416-436, and 462-482; these read FPWLTTIILLPIVAALFIPII, LAVGLVDFALIVYAFYSGFDL, LIILTGFITTLATMAAWPVTL, PKLFYFLMLLMYGGQIAVFAV, ILLFFLVWELELVPVYLILSI, FILYTAGGSLFILLAGLTLAF, LLLYAGFLIAYGVKLPIFPLH, TAPAHMLLAGILLKMGGYALL, AVFAPVLVILGVVNIIYAAFT, ISHMGFVLIGLASFTDLGMSG, AMLQMISHGLIGASLFFMVGA, LALPGMSGFVAELMVFVGFAT, IVVVLMGVGVILTPIYLLSML, and VFIIGCLLVPIIGIGFYPKLI.

This sequence belongs to the complex I subunit 4 family.

Its subcellular location is the cellular thylakoid membrane. It catalyses the reaction a plastoquinone + NADH + (n+1) H(+)(in) = a plastoquinol + NAD(+) + n H(+)(out). It carries out the reaction a plastoquinone + NADPH + (n+1) H(+)(in) = a plastoquinol + NADP(+) + n H(+)(out). Functionally, NDH-1 shuttles electrons from NAD(P)H, via FMN and iron-sulfur (Fe-S) centers, to quinones in the respiratory chain. The immediate electron acceptor for the enzyme in this species is believed to be plastoquinone. Couples the redox reaction to proton translocation (for every two electrons transferred, four hydrogen ions are translocated across the cytoplasmic membrane), and thus conserves the redox energy in a proton gradient. The polypeptide is NAD(P)H-quinone oxidoreductase chain 4-1 (ndhD1) (Synechocystis sp. (strain ATCC 27184 / PCC 6803 / Kazusa)).